The chain runs to 423 residues: uncharacterized protein (423 aa).

A signal peptide spans 1–16; the sequence is MKSRIFFITLLTIVAA. Topologically, residues 17–402 are extracellular; the sequence is QESADQLCSS…SSSAKEEQTS (386 aa). 16 disulfides stabilise this stretch: Cys-24/Cys-217, Cys-33/Cys-43, Cys-36/Cys-68, Cys-46/Cys-57, Cys-219/Cys-238, Cys-230/Cys-241, Cys-243/Cys-252, Cys-254/Cys-288, Cys-271/Cys-286, Cys-280/Cys-291, Cys-293/Cys-303, Cys-305/Cys-327, Cys-310/Cys-325, Cys-319/Cys-330, Cys-332/Cys-341, and Cys-343/Cys-350. The N-linked (GlcNAc...) asparagine glycan is linked to Asn-65. The segment at 215 to 350 is cysteine-rich tandem repeats; the sequence is CGCECEKHPE…CSCSTASNNC (136 aa). I-EGF domains follow at residues 219–253, 254–304, and 305–342; these read CEKHPEINSRLCHQNGHLVCGQCVCDQSRGGDKCE, CPLA…KFCQ, and CDNDSCPLAVNGKVCSGNGVCDCGVCKCEMGWERDDCS. Asn-274 is a glycosylation site (N-linked (GlcNAc...) asparagine). A glycan (N-linked (GlcNAc...) asparagine) is linked at Asn-307. Positions 354–406 are disordered; it reads GTPAPEEKDKPESVPEEPEATEKPDDMPSDSDLEKELDESSSAKEEQTSSSGV. The span at 380 to 392 shows a compositional bias: acidic residues; sequence MPSDSDLEKELDE. Residues 403-421 form a helical membrane-spanning segment; the sequence is SSGVVSRVCVLLTFFLLVL. Residues 422-423 are Cytoplasmic-facing; it reads NF.

This sequence belongs to the integrin beta chain family.

It localises to the membrane. This is an uncharacterized protein from Caenorhabditis elegans.